Here is a 500-residue protein sequence, read N- to C-terminus: C6 finger domain transcription factor sirZ (500 aa).

Residues 28–54 (CNACHEVKLKCLGGQPCARCRNKQVEC) constitute a DNA-binding region (zn(2)-C6 fungal-type). Residues 79 to 88 (QAKAMSRPEE) are compositionally biased toward basic and acidic residues. 2 disordered regions span residues 79 to 168 (QAKA…EQIS) and 302 to 332 (AGSFSTSGPGSSQEGSHFLSSRHSQSSGMYQ). Residues 135–147 (GAEEELLDQEERD) show a composition bias toward acidic residues. Low complexity predominate over residues 154–165 (LVENPPNLNPLE). Polar residues predominate over residues 304–316 (SFSTSGPGSSQEG). Residues 317–328 (SHFLSSRHSQSS) show a composition bias toward low complexity.

It localises to the nucleus. Transcription factor that regulates sirodesmin production and contributes to virulence. Probably binds to the consensus motif TCGGN(3)CCGA found in the promoters of sirT, sirP, sirO, sirN, sirP, sirB, sirR, sirJ and sirQ. The polypeptide is C6 finger domain transcription factor sirZ (Leptosphaeria maculans (Blackleg fungus)).